The sequence spans 356 residues: Protein-glutamate methylesterase/protein-glutamine glutaminase 3 (356 aa).

In terms of domain architecture, Response regulatory spans 3-120 (KVAIVDDSAV…KGFLEESQAR (118 aa)). Asp-54 carries the 4-aspartylphosphate modification. One can recognise a CheB-type methylesterase domain in the interval 165–356 (NQTTDRVVAL…AEEIIAFTKQ (192 aa)). Catalysis depends on residues Ser-177, His-203, and Asp-299.

It belongs to the CheB family. Phosphorylated by CheA. Phosphorylation of the N-terminal regulatory domain activates the methylesterase activity.

Its subcellular location is the cytoplasm. It carries out the reaction [protein]-L-glutamate 5-O-methyl ester + H2O = L-glutamyl-[protein] + methanol + H(+). The catalysed reaction is L-glutaminyl-[protein] + H2O = L-glutamyl-[protein] + NH4(+). Functionally, involved in chemotaxis. Part of a chemotaxis signal transduction system that modulates chemotaxis in response to various stimuli. Catalyzes the demethylation of specific methylglutamate residues introduced into the chemoreceptors (methyl-accepting chemotaxis proteins or MCP) by CheR. Also mediates the irreversible deamidation of specific glutamine residues to glutamic acid. This is Protein-glutamate methylesterase/protein-glutamine glutaminase 3 from Shewanella oneidensis (strain ATCC 700550 / JCM 31522 / CIP 106686 / LMG 19005 / NCIMB 14063 / MR-1).